A 206-amino-acid polypeptide reads, in one-letter code: Outer-membrane lipoprotein LolB (206 aa).

The signal sequence occupies residues 1-18; that stretch reads MKTFKFFTALFATAILTA. The N-palmitoyl cysteine moiety is linked to residue Cys-19. Cys-19 is lipidated: S-diacylglycerol cysteine.

It belongs to the LolB family. Monomer.

It is found in the cell outer membrane. Functionally, plays a critical role in the incorporation of lipoproteins in the outer membrane after they are released by the LolA protein. This is Outer-membrane lipoprotein LolB from Haemophilus influenzae (strain PittGG).